A 1230-amino-acid polypeptide reads, in one-letter code: Formin-like protein 14 (1230 aa).

The region spanning 1-194 is the Phosphatase tensin-type domain; the sequence is MSLLSRFFYK…QYVARRNINS (194 aa). The active-site Phosphocysteine intermediate is Cys127. A C2 tensin-type domain is found at 200-339; the sequence is ERALSLDCVI…FRAEVLFGEV (140 aa). Disordered regions lie at residues 412-432, 460-822, and 1187-1230; these read FNSP…SSDE, HESS…LKPL, and ENEK…RHRT. The segment covering 484–496 has biased composition (low complexity); sequence DNPLNLPSDPPSS. Composition is skewed to pro residues over residues 503–514, 524–535, 545–556, and 566–575; these read LPPPPPPPPPPL, SQPPPPPPPPPL, and SQPPPPPPLP. Residues 579 to 591 are compositionally biased toward polar residues; it reads NRDPLTTLHQPIN. 7 stretches are compositionally biased toward pro residues: residues 592 to 630, 637 to 649, 660 to 672, 679 to 688, 699 to 711, 718 to 728, and 735 to 766; these read KTPP…PPPS, PSAP…PPPS, QPPP…PPTR, APPPPPPPPT, PSTP…PPPK, PKPPAPPPLPP, and APPP…PPPG. Positions 809 to 1207 constitute an FH2 domain; it reads VPTAAPKKTA…KLEKEAIKEK (399 aa). Positions 1187-1215 are enriched in basic and acidic residues; the sequence is ENEKQAEAEKKKLEKEAIKEKSATKKDGV.

Belongs to the formin-like family. Class-II subfamily.

This is Formin-like protein 14 (FH14) from Arabidopsis thaliana (Mouse-ear cress).